Reading from the N-terminus, the 118-residue chain is NADH-quinone oxidoreductase subunit A 1 (118 aa).

The next 3 membrane-spanning stretches (helical) occupy residues 1-21, 60-80, and 87-107; these read MLGV…FGLA, FYII…MYPW, and LGIF…VGYI.

The protein belongs to the complex I subunit 3 family. NDH-1 is composed of 14 different subunits. Subunits NuoA, H, J, K, L, M, N constitute the membrane sector of the complex.

The protein localises to the cell inner membrane. The catalysed reaction is a quinone + NADH + 5 H(+)(in) = a quinol + NAD(+) + 4 H(+)(out). In terms of biological role, NDH-1 shuttles electrons from NADH, via FMN and iron-sulfur (Fe-S) centers, to quinones in the respiratory chain. The immediate electron acceptor for the enzyme in this species is believed to be ubiquinone. Couples the redox reaction to proton translocation (for every two electrons transferred, four hydrogen ions are translocated across the cytoplasmic membrane), and thus conserves the redox energy in a proton gradient. This is NADH-quinone oxidoreductase subunit A 1 from Geobacter sulfurreducens (strain ATCC 51573 / DSM 12127 / PCA).